A 483-amino-acid polypeptide reads, in one-letter code: ATP-dependent RNA helicase DDX25 (483 aa).

Positions 97 to 125 match the Q motif motif; that stretch reads KSFEELHLKNELLRGIYAMGFNRPSKIQE. One can recognise a Helicase ATP-binding domain in the interval 130 to 300; sequence MMLADPPQNL…ERIVPDPNII (171 aa). 143 to 150 provides a ligand contact to ATP; sequence SQSGTGKT. Residues 247 to 250 carry the DEAD box motif; sequence DEAD. In terms of domain architecture, Helicase C-terminal spans 311-478; that stretch reads NIQQFYDQCE…KLNSMDMDEM (168 aa).

This sequence belongs to the DEAD box helicase family. An mRNA component of germ plasm. Localizes to the granulo-fibrillar material (GFM) of the mitochondrial cloud in stage I oocytes. Associated, at a low level, with the periphery of mature germinal granules in later stage oocytes. Localizes to the vegetal cortex in stage II oocytes and segregates with germ plasm during early embryogenesis. In adults, expression is restricted to the ovary and, at a lower level, to spermatogonia, spermatocytes and spermatids of the testis.

The protein localises to the cytoplasm. It is found in the nucleus. The catalysed reaction is ATP + H2O = ADP + phosphate + H(+). ATP-dependent RNA helicase. This Xenopus laevis (African clawed frog) protein is ATP-dependent RNA helicase DDX25.